The primary structure comprises 486 residues: MTHYIQGQWHAGKGHDVASINPANAQTIWTGKTATAEQVNAAVDAAREAQFDWFMLGFDARLAIVEAYRSQLEANKAELAETIAQETGKPQWETATEVGAMIGKIALSAAAYNKRTGTEANDTPAGRAVIRHKPHGVVAVFGPYNFPGHLPNGHIVPALLAGNTVIFKPSELTPKVAELMVSLWDKAGLPAGVLNLVQGEVDTGKALASHPQLDGLFFTGSSRTGHFLHQQYAGHPGKILALEMGGNNPLIIKGVQDIKAAVHDILQSAYISSGQRCTCARRLYVEQGEQGDALIAMLAAAVKQIKVGPWNAQPQPFMGSMISETAAKGMVAAQTNLQNLGGVSLVELTHLEAGTGLVSPGLIDVTAIDVLPDEEYFGPLLQLVRYSDFDQAIKLANQTRYGLSAGLLADSREDYDYFLARIRAGIVNWNKQITGASGAAPFGGVGASGNHRASAFYAADYCAYPVASVEADAVSLPATLSPGLSL.

Residue 220-225 (GSSRTG) coordinates NAD(+). Active-site residues include E243 and C277.

Belongs to the aldehyde dehydrogenase family. AstD subfamily.

It catalyses the reaction N-succinyl-L-glutamate 5-semialdehyde + NAD(+) + H2O = N-succinyl-L-glutamate + NADH + 2 H(+). It functions in the pathway amino-acid degradation; L-arginine degradation via AST pathway; L-glutamate and succinate from L-arginine: step 4/5. Its function is as follows. Catalyzes the NAD-dependent reduction of succinylglutamate semialdehyde into succinylglutamate. This chain is N-succinylglutamate 5-semialdehyde dehydrogenase, found in Shewanella baltica (strain OS155 / ATCC BAA-1091).